We begin with the raw amino-acid sequence, 418 residues long: Light-independent protochlorophyllide reductase subunit N (418 aa).

3 residues coordinate [4Fe-4S] cluster: Cys-17, Cys-42, and Cys-103.

The protein belongs to the BchN/ChlN family. As to quaternary structure, protochlorophyllide reductase is composed of three subunits; ChlL, ChlN and ChlB. Forms a heterotetramer of two ChlB and two ChlN subunits. [4Fe-4S] cluster serves as cofactor.

The catalysed reaction is chlorophyllide a + oxidized 2[4Fe-4S]-[ferredoxin] + 2 ADP + 2 phosphate = protochlorophyllide a + reduced 2[4Fe-4S]-[ferredoxin] + 2 ATP + 2 H2O. The protein operates within porphyrin-containing compound metabolism; chlorophyll biosynthesis (light-independent). Component of the dark-operative protochlorophyllide reductase (DPOR) that uses Mg-ATP and reduced ferredoxin to reduce ring D of protochlorophyllide (Pchlide) to form chlorophyllide a (Chlide). This reaction is light-independent. The NB-protein (ChlN-ChlB) is the catalytic component of the complex. The protein is Light-independent protochlorophyllide reductase subunit N of Prochlorococcus marinus (strain MIT 9313).